A 181-amino-acid chain; its full sequence is uncharacterized protein (181 aa).

This is an uncharacterized protein from Sinorhizobium fredii (strain NBRC 101917 / NGR234).